The following is a 544-amino-acid chain: Nucleosome assembly protein 1-like 3 (544 aa).

Disordered regions lie at residues 1–109 (MAEA…LFLD) and 168–345 (PTEE…KKED). The span at 35-83 (SNSSSSTNSCSSSGSSSSGSSSSSSSSSSSSSSSSSSSSGSSGSSSNGS) shows a compositional bias: low complexity. Residues 168–192 (PTEEECEWNSEEEFSGDEEMQDDTP) are compositionally biased toward acidic residues. 3 stretches are compositionally biased toward basic and acidic residues: residues 207-228 (CNEKAEVKEEGTHVPEEVPEAK), 235-277 (PKET…KADS), and 314-332 (PAREAQKRVPETRPEEGVN).

Belongs to the nucleosome assembly protein (NAP) family. Expressed in brain.

It localises to the nucleus. It is found in the cytoplasm. The polypeptide is Nucleosome assembly protein 1-like 3 (Nap1l3) (Mus musculus (Mouse)).